A 159-amino-acid polypeptide reads, in one-letter code: NADH-quinone oxidoreductase subunit I (159 aa).

4Fe-4S ferredoxin-type domains lie at 51-80 (RRYE…IEAD) and 90-119 (TRYD…EGPN). [4Fe-4S] cluster is bound by residues Cys60, Cys63, Cys66, Cys70, Cys99, Cys102, Cys105, and Cys109.

The protein belongs to the complex I 23 kDa subunit family. As to quaternary structure, NDH-1 is composed of 14 different subunits. Subunits NuoA, H, J, K, L, M, N constitute the membrane sector of the complex. It depends on [4Fe-4S] cluster as a cofactor.

It localises to the cell inner membrane. It catalyses the reaction a quinone + NADH + 5 H(+)(in) = a quinol + NAD(+) + 4 H(+)(out). In terms of biological role, NDH-1 shuttles electrons from NADH, via FMN and iron-sulfur (Fe-S) centers, to quinones in the respiratory chain. The immediate electron acceptor for the enzyme in this species is believed to be ubiquinone. Couples the redox reaction to proton translocation (for every two electrons transferred, four hydrogen ions are translocated across the cytoplasmic membrane), and thus conserves the redox energy in a proton gradient. This chain is NADH-quinone oxidoreductase subunit I, found in Rickettsia massiliae (strain Mtu5).